Here is a 269-residue protein sequence, read N- to C-terminus: Ribonuclease HII (269 aa).

Residues 28–222 enclose the RNase H type-2 domain; that stretch reads RHVAGADEAG…VSGRRGAPPR (195 aa). A divalent metal cation-binding residues include Asp34, Glu35, and Asp128.

It belongs to the RNase HII family. Requires Mn(2+) as cofactor. It depends on Mg(2+) as a cofactor.

Its subcellular location is the cytoplasm. The enzyme catalyses Endonucleolytic cleavage to 5'-phosphomonoester.. Endonuclease that specifically degrades the RNA of RNA-DNA hybrids. The polypeptide is Ribonuclease HII (Salinispora arenicola (strain CNS-205)).